The primary structure comprises 534 residues: EH domain-containing protein 1 (534 aa).

Residue Met1 is modified to N-acetylmethionine. In terms of domain architecture, Dynamin-type G spans 55–286; sequence FDNKPMVLLV…DLFKDIQSLP (232 aa). A G1 motif region spans residues 65–72; sequence GQYSTGKT. An ATP-binding site is contributed by 65–72; sequence GQYSTGKT. The interval 91-92 is G2 motif; that stretch reads EP. The interval 153–156 is G3 motif; it reads DTPG. The stretch at 198 to 227 forms a coiled coil; that stretch reads DEFSEVIKALKNHEDKIRVVLNKADQIETQ. The G4 motif stretch occupies residues 219–222; the sequence is NKAD. Lys220 serves as a coordination point for ATP. Ile243 is a region of interest (G5 motif). Trp258 is a binding site for ATP. Ser355 and Ser456 each carry phosphoserine. An EH domain is found at 444–532; the sequence is DKPTYDEIFY…PHLIPPSKRR (89 aa). Residues 476–511 enclose the EF-hand domain; sequence LPNTVLGKIWKLADVDKDGLLDDEEFALANHLIKVK. Ca(2+)-binding residues include Asp489, Asp491, Asp493, and Glu500.

The protein belongs to the TRAFAC class dynamin-like GTPase superfamily. Dynamin/Fzo/YdjA family. EHD subfamily. Homooligomer, and heterooligomer with EHD2, EHD3 and EHD4, ATP-binding is required for heterooligomerization. Interacts (via EH domain) with MICALL1 (via NPF1 motif); the interaction is direct and recruits EHD1 to membranes. Interacts with RAB35; the interaction is indirect through MICALL1 and recruits EHD1 to membranes. Interacts (via EH domain) with PACSIN2 (via NPF motifs); regulates localization to tubular recycling endosome membranes. Interacts with PACSIN1. Interacts with RAB8A. Interacts with FER1L5 (via second C2 domain). Interacts with MYOF. Interacts with ZFYVE20. Interacts (via EH domain) with RAB11FIP2.

The protein resides in the recycling endosome membrane. It is found in the early endosome membrane. It localises to the cell membrane. Its subcellular location is the cell projection. The protein localises to the cilium membrane. In terms of biological role, ATP- and membrane-binding protein that controls membrane reorganization/tubulation upon ATP hydrolysis. In vitro causes vesiculation of endocytic membranes. Acts in early endocytic membrane fusion and membrane trafficking of recycling endosomes. Recruited to endosomal membranes upon nerve growth factor stimulation, indirectly regulates neurite outgrowth. Plays a role in myoblast fusion. Involved in the unidirectional retrograde dendritic transport of endocytosed BACE1 and in efficient sorting of BACE1 to axons implicating a function in neuronal APP processing. Plays a role in the formation of the ciliary vesicle (CV), an early step in cilium biogenesis. Proposed to be required for the fusion of distal appendage vesicles (DAVs) to form the CV by recruiting SNARE complex component SNAP29. Is required for recruitment of transition zone proteins CEP290, RPGRIP1L, TMEM67 and B9D2, and of IFT20 following DAV reorganization before Rab8-dependent ciliary membrane extension. Required for the loss of CCP110 form the mother centriole essential for the maturation of the basal body during ciliogenesis. The sequence is that of EH domain-containing protein 1 from Rattus norvegicus (Rat).